Reading from the N-terminus, the 103-residue chain is Large ribosomal subunit protein bL21 (103 aa).

Belongs to the bacterial ribosomal protein bL21 family. In terms of assembly, part of the 50S ribosomal subunit. Contacts protein L20.

Its function is as follows. This protein binds to 23S rRNA in the presence of protein L20. This is Large ribosomal subunit protein bL21 from Alteromonas mediterranea (strain DSM 17117 / CIP 110805 / LMG 28347 / Deep ecotype).